Consider the following 671-residue polypeptide: DNA ligase (671 aa).

Residues 32 to 36 (DAEYD), 81 to 82 (SL), and glutamate 113 contribute to the NAD(+) site. Lysine 115 (N6-AMP-lysine intermediate) is an active-site residue. Arginine 136, glutamate 173, lysine 290, and lysine 314 together coordinate NAD(+). 4 residues coordinate Zn(2+): cysteine 408, cysteine 411, cysteine 426, and cysteine 432. A BRCT domain is found at 593–671 (EIDSPFAGKT…EAEMLRLLGS (79 aa)).

This sequence belongs to the NAD-dependent DNA ligase family. LigA subfamily. Mg(2+) is required as a cofactor. It depends on Mn(2+) as a cofactor.

It carries out the reaction NAD(+) + (deoxyribonucleotide)n-3'-hydroxyl + 5'-phospho-(deoxyribonucleotide)m = (deoxyribonucleotide)n+m + AMP + beta-nicotinamide D-nucleotide.. Functionally, DNA ligase that catalyzes the formation of phosphodiester linkages between 5'-phosphoryl and 3'-hydroxyl groups in double-stranded DNA using NAD as a coenzyme and as the energy source for the reaction. It is essential for DNA replication and repair of damaged DNA. The protein is DNA ligase of Shigella sonnei (strain Ss046).